A 366-amino-acid chain; its full sequence is Tyrosine--tRNA ligase (366 aa).

Residues Tyr-41, Tyr-167, Gln-171, Asp-174, and Gln-189 each coordinate L-tyrosine. Positions 241-245 (KMSKS) match the 'KMSKS' region motif. Lys-244 contributes to the ATP binding site.

It belongs to the class-I aminoacyl-tRNA synthetase family. TyrS type 4 subfamily. As to quaternary structure, homodimer.

Its subcellular location is the cytoplasm. The catalysed reaction is tRNA(Tyr) + L-tyrosine + ATP = L-tyrosyl-tRNA(Tyr) + AMP + diphosphate + H(+). In terms of biological role, catalyzes the attachment of tyrosine to tRNA(Tyr) in a two-step reaction: tyrosine is first activated by ATP to form Tyr-AMP and then transferred to the acceptor end of tRNA(Tyr). In Saccharolobus solfataricus (strain ATCC 35092 / DSM 1617 / JCM 11322 / P2) (Sulfolobus solfataricus), this protein is Tyrosine--tRNA ligase.